A 239-amino-acid chain; its full sequence is Homeobox-leucine zipper protein HOX12 (239 aa).

The tract at residues 25-65 (ATSGGEQKKARQRRRRKVKPEAAAALAGESGGDEQAKKRRL) is disordered. The segment at residues 58-117 (EQAKKRRLSDEQARFLEMSFKKERKLETPRKVQLAAELGLDAKQVAVWFQNRRARHKSKL) is a DNA-binding region (homeobox). Positions 107 to 168 (QNRRARHKSK…KLAAVAAATT (62 aa)) form a coiled coil.

Belongs to the HD-ZIP homeobox family. Class I subfamily. As to expression, expressed in seedlings, roots, stems, leaf sheaths and panicles.

It localises to the nucleus. Its function is as follows. Probable transcription factor. This is Homeobox-leucine zipper protein HOX12 (HOX12) from Oryza sativa subsp. japonica (Rice).